The primary structure comprises 181 residues: Peptidyl-tRNA hydrolase 2, mitochondrial (181 aa).

Residues 10–32 (YLVHPGTLSLAAGVACGMCLGWG) form a helical membrane-spanning segment. Residues lysine 78, lysine 83, lysine 97, lysine 108, lysine 117, and lysine 179 each participate in a glycyl lysine isopeptide (Lys-Gly) (interchain with G-Cter in ubiquitin) cross-link.

It belongs to the PTH2 family. As to quaternary structure, monomer. Ubiquitinated by PRKN during mitophagy, leading to its degradation and enhancement of mitophagy. Deubiquitinated by USP30.

The protein localises to the mitochondrion outer membrane. The catalysed reaction is an N-acyl-L-alpha-aminoacyl-tRNA + H2O = an N-acyl-L-amino acid + a tRNA + H(+). In terms of biological role, peptidyl-tRNA hydrolase which releases tRNAs from the ribosome during protein synthesis. Promotes caspase-independent apoptosis by regulating the function of two transcriptional regulators, AES and TLE1. The protein is Peptidyl-tRNA hydrolase 2, mitochondrial (Ptrh2) of Mus musculus (Mouse).